Consider the following 375-residue polypeptide: tRNA/tmRNA (uracil-C(5))-methyltransferase (375 aa).

Residues Q197, Y225, N230, E246, and D306 each coordinate S-adenosyl-L-methionine. The active-site Nucleophile is the C331. The Proton acceptor role is filled by E365.

It belongs to the class I-like SAM-binding methyltransferase superfamily. RNA M5U methyltransferase family. TrmA subfamily.

The enzyme catalyses uridine(54) in tRNA + S-adenosyl-L-methionine = 5-methyluridine(54) in tRNA + S-adenosyl-L-homocysteine + H(+). The catalysed reaction is uridine(341) in tmRNA + S-adenosyl-L-methionine = 5-methyluridine(341) in tmRNA + S-adenosyl-L-homocysteine + H(+). Its function is as follows. Dual-specificity methyltransferase that catalyzes the formation of 5-methyluridine at position 54 (m5U54) in all tRNAs, and that of position 341 (m5U341) in tmRNA (transfer-mRNA). This is tRNA/tmRNA (uracil-C(5))-methyltransferase from Aliarcobacter butzleri (strain RM4018) (Arcobacter butzleri).